Consider the following 957-residue polypeptide: MTTPLKPLDDAATSFARRHIGPSPRDVAAMLETVGAKSVAELMAQTLPGTIRQATPLTLEPALSEVEAIGHMRALAAQNQVFTSLIGQGYSGTIMPAVIQRNILENPAWYTAYTPYQPEISQGRLEALFNFQTMICDLTGLDVANASLLDEGTAAAEAMALAERSARAKTKAFFVDRNVHPQTLAVLRTRAEPLGWQLIVGDPVKDLDGAEVFGGLLQYPETTGALRDPRADIAKLHDKGALAILAADLLALTVIASPGELGADIAIGSAQRFGVPMGYGGPHAAYMAVRDALKRSLPGRIVGLSVDSRGAPAYRLALQTREQHIRREKATSNICTAQVLLAVIAAMYAVYHGPDGLKSIARTVHRRAAVLAAGLRKLGFAPASDSFFDTVLVEAGANCDEIIARAESQRINLGRDGSRLRIALDETTTADVVEAVWRAFGGELSYAAIEAEARDAVPAELKRQRPFLTHPVFHAHRSETEMLRYLRKLADRDLALDRAMIPLGSCTMKLNATTEMIPLTWPEFSSLHPFVPRAQAAGYHTMFADLQDWLCRISGYDAVSLQPNSGAQGEYAGLLAIRGYHAARGEGHRTICLIPSSAHGTNPASAHMVGMEVVVVGCDSNGNVDLADLKAKAELHSAKLAAIMITYPSTHGVFEEHIRDICDIVHAHGGQVYLDGANLNAQVGLSRPGDYGADVSHFNLHKTFCIPHGGGGPGMGPIGVKAHLAPFLPGHPATDAATPSPVGPVSAAPYGSASILTISYIYMLLMGGEGLTRATEIAILNANYVAARLDPHFPVLYRNERGRVAHECIIDPRPLKQTCGVTVDDIAKRLIDYGFHAPTMSFPVAGTLMIEPTESESKAELDRFCDAMIAIRKEIAAVEQGRFTIEASPLRHAPHTVHDIADDDWNRVYRRSEGCFPEGTSRTDKYWCPVGRVDNVYGDRNLVCSCPPIGDYAQAAE.

Position 702 is an N6-(pyridoxal phosphate)lysine (lysine 702).

The protein belongs to the GcvP family. In terms of assembly, the glycine cleavage system is composed of four proteins: P, T, L and H. Requires pyridoxal 5'-phosphate as cofactor.

The enzyme catalyses N(6)-[(R)-lipoyl]-L-lysyl-[glycine-cleavage complex H protein] + glycine + H(+) = N(6)-[(R)-S(8)-aminomethyldihydrolipoyl]-L-lysyl-[glycine-cleavage complex H protein] + CO2. The glycine cleavage system catalyzes the degradation of glycine. The P protein binds the alpha-amino group of glycine through its pyridoxal phosphate cofactor; CO(2) is released and the remaining methylamine moiety is then transferred to the lipoamide cofactor of the H protein. The sequence is that of Glycine dehydrogenase (decarboxylating) from Bradyrhizobium sp. (strain BTAi1 / ATCC BAA-1182).